Consider the following 133-residue polypeptide: Protein PROTON GRADIENT REGULATION 5, chloroplastic (133 aa).

The transit peptide at 1–60 (MAAASISAIGCNQTLIGTSFYGGWGSSISGEDYQTMLSKTVAPPQQARVSRKAIRAVPMM) directs the protein to the chloroplast.

The protein belongs to the PGR5 family. In terms of assembly, interacts with PGRL1A and PGRL1B. Post-translationally, disulfide bonds; Cys-11 and Cys-105 are probably involved in the formation of disulfide bridges with 'Cys-300' and 'Cys-303' of PGRL1A. 'Cys-272' and 'Cys-275' of PGRL1A may also be used to form the disulfide bridges, but in this case the cyclic electron flow is lost.

The protein resides in the plastid. It is found in the chloroplast thylakoid membrane. Critical for growth under fluctuating-light conditions. Involved in the regulation of the cyclic electron flow (CEF) around Photosystem I. Essential for the reduction of PGRL1A by ferredoxin and for photoprotection. Contributes to maximize photosynthesis efficiency after a long dark adaptation via the regulation of non-photochemical quenching (NPQ); acts independently from DLDG1. Promotes the induction of steady-state proton motive force (pmf) and energy-dependent quenching (qE). The polypeptide is Protein PROTON GRADIENT REGULATION 5, chloroplastic (Arabidopsis thaliana (Mouse-ear cress)).